Here is a 316-residue protein sequence, read N- to C-terminus: Ribosomal protein L11 methyltransferase (316 aa).

Residues Thr-157, Gly-178, Asp-200, and Asn-243 each contribute to the S-adenosyl-L-methionine site.

This sequence belongs to the methyltransferase superfamily. PrmA family.

It is found in the cytoplasm. The enzyme catalyses L-lysyl-[protein] + 3 S-adenosyl-L-methionine = N(6),N(6),N(6)-trimethyl-L-lysyl-[protein] + 3 S-adenosyl-L-homocysteine + 3 H(+). Its function is as follows. Methylates ribosomal protein L11. The chain is Ribosomal protein L11 methyltransferase from Streptococcus pneumoniae (strain 70585).